The primary structure comprises 193 residues: Ion-translocating oxidoreductase complex subunit A (193 aa).

The next 6 membrane-spanning stretches (helical) occupy residues 5–25, 39–59, 63–83, 102–122, 134–154, and 171–191; these read LLLF…FLGL, MGMG…AWLI, ILIP…VIAV, LLGI…VALL, ALYG…FAAI, and AIAL…SGLV.

It belongs to the NqrDE/RnfAE family. In terms of assembly, the complex is composed of six subunits: RsxA, RsxB, RsxC, RsxD, RsxE and RsxG.

It localises to the cell inner membrane. In terms of biological role, part of a membrane-bound complex that couples electron transfer with translocation of ions across the membrane. Required to maintain the reduced state of SoxR. This is Ion-translocating oxidoreductase complex subunit A from Escherichia fergusonii (strain ATCC 35469 / DSM 13698 / CCUG 18766 / IAM 14443 / JCM 21226 / LMG 7866 / NBRC 102419 / NCTC 12128 / CDC 0568-73).